We begin with the raw amino-acid sequence, 167 residues long: Osteocalcin 2a (167 aa).

The N-terminal stretch at 1–18 (MKSLTLLTICAVLSVSLS) is a signal peptide. Residues 19-118 (MNDLALDVVL…LASVLLRRKR (100 aa)) constitute a propeptide that is removed on maturation. The disordered stretch occupies residues 28–99 (LDPAPDPATE…TTEDPAAATE (72 aa)). The span at 38–87 (PAPAADSSASSSASSSSSSASDSSASASDSSDSDSSSASSSSSSSESASA) shows a compositional bias: low complexity. Residues 131-163 (QVESLSEVCELNLACEHMAETAGIVAAYTAYYG) enclose the Gla domain. 3 residues coordinate Ca(2+): Glu133, Glu137, and Glu140. 3 positions are modified to 4-carboxyglutamate: Glu133, Glu137, and Glu140. An intrachain disulfide couples Cys139 to Cys145.

This sequence belongs to the osteocalcin/matrix Gla protein family. Post-translationally, gamma-carboxyglutamate residues are formed by vitamin K dependent carboxylation. These residues are essential for the binding of calcium.

Its subcellular location is the secreted. In terms of biological role, binds strongly to apatite and calcium. The protein is Osteocalcin 2a of Oncorhynchus mykiss (Rainbow trout).